The sequence spans 550 residues: Carnitine transporter (550 aa).

12 consecutive transmembrane segments (helical) span residues F15–S35, F53–F73, S92–L112, V137–I157, M196–F216, F230–V250, V263–I283, W317–T337, E347–F367, L401–A421, L451–L471, and A477–V497.

It belongs to the BCCT transporter (TC 2.A.15) family.

Its subcellular location is the cell inner membrane. With respect to regulation, inhibited by the protonophore 3,3',4',5-tetrachlorosalicylanilide (TCS). Not activated by osmolarity. Its function is as follows. Catalyzes the energy-dependent uptake of carnitine and is essential for growth on carnitine. Can also mediate the uptake of choline. Is probably a proton:substrate symporter. This Acinetobacter baumannii (strain ATCC 19606 / DSM 30007 / JCM 6841 / CCUG 19606 / CIP 70.34 / NBRC 109757 / NCIMB 12457 / NCTC 12156 / 81) protein is Carnitine transporter.